Consider the following 106-residue polypeptide: Large ribosomal subunit protein cL38 (106 aa).

The N-terminal 39 residues, 1–39, are a transit peptide targeting the chloroplast; that stretch reads MSVSAIFGTGIVTVAASPVLRQFQVPKLGNGGGLGMVIE. The tract at residues 42 to 70 is disordered; it reads SRPQKKSTAHHRKTRPKKTQPWDIKRKPT. The span at 44-59 shows a compositional bias: basic residues; that stretch reads PQKKSTAHHRKTRPKK.

This sequence belongs to the chloroplast-specific ribosomal protein cL38 family. In terms of assembly, part of the 50S ribosomal subunit.

The protein resides in the plastid. It localises to the chloroplast. The sequence is that of Large ribosomal subunit protein cL38 (PSRP6) from Arabidopsis thaliana (Mouse-ear cress).